We begin with the raw amino-acid sequence, 365 residues long: Galactoside alpha-(1,2)-fucosyltransferase 1 (365 aa).

Residues 1 to 8 (MWVPSRRH) lie on the Cytoplasmic side of the membrane. A helical; Signal-anchor for type II membrane protein transmembrane segment spans residues 9–28 (LCLTFLLVCVLAAIFFLNVY). Over 29-365 (QDLFYSGLDL…LSPLQMLAGP (337 aa)) the chain is Lumenal. N-linked (GlcNAc...) asparagine glycosylation is found at N65, N301, and N327.

The protein belongs to the glycosyltransferase 11 family.

It is found in the golgi apparatus. The protein resides in the golgi stack membrane. It catalyses the reaction a beta-D-galactosyl-(1-&gt;4)-N-acetyl-beta-D-glucosaminyl derivative + GDP-beta-L-fucose = an alpha-L-Fuc-(1-&gt;2)-beta-D-Gal-(1-&gt;4)-beta-D-GlcNAc derivative + GDP + H(+). The catalysed reaction is a ganglioside GA1 + GDP-beta-L-fucose = a ganglioside Fuc-GA1 + GDP + H(+). It carries out the reaction a beta-D-Gal-(1-&gt;3)-beta-D-GlcNAc-(1-&gt;3)-beta-D-Gal-(1-&gt;4)-beta-D-Glc-(1&lt;-&gt;1')-Cer(d18:1(4E)) + GDP-beta-L-fucose = alpha-L-fucosyl-(1-&gt;2)- beta-D-galactosyl-(1-&gt;3)-N-acetyl-beta-D-glucosaminyl-(1-&gt;3)-beta-D-galactosyl-(1-&gt;4)-beta-D-glucosyl-(1&lt;-&gt;1')-N-acylsphing-4-enine + GDP + H(+). The enzyme catalyses a neolactoside nLc4Cer(d18:1(4E)) + GDP-beta-L-fucose = a neolactoside IV(2)-alpha-Fuc-nLc4Cer(d18:1(4E)) + GDP + H(+). It catalyses the reaction a ganglioside GM1 + GDP-beta-L-fucose = a ganglioside Fuc-GM1 + GDP + H(+). The catalysed reaction is beta-D-galactosyl-(1-&gt;3)-N-acetyl-D-galactosamine + GDP-beta-L-fucose = alpha-L-fucosyl-(1-&gt;2)-beta-D-galactosyl-(1-&gt;3)-N-acetyl-D-galactosamine + GDP + H(+). Its pathway is protein modification; protein glycosylation. Its function is as follows. Catalyzes the transfer of L-fucose, from a guanosine diphosphate-beta-L-fucose, to the terminal galactose residue of glycoconjugates through an alpha(1,2) linkage leading to H antigen synthesis that is an intermediate substrate in the synthesis of ABO blood group antigens. H antigen is essential for maturation of the glomerular layer of the main olfactory bulb, in cell migration and early cell-cell contacts during tumor associated angiogenesis. Preferentially fucosylates soluble lactose and to a lesser extent fucosylates glycolipids gangliosides GA1 and GM1a. The protein is Galactoside alpha-(1,2)-fucosyltransferase 1 of Sus scrofa (Pig).